The primary structure comprises 257 residues: 7-carboxy-7-deazaguanine synthase (257 aa).

Substrate-binding positions include 29 to 31 and R44; that span reads LQG. The region spanning 35–253 is the Radical SAM core domain; it reads LAGTPSVFVR…PRLHVALWND (219 aa). [4Fe-4S] cluster contacts are provided by C48, C52, and C55. S57 provides a ligand contact to Mg(2+). T90 contributes to the substrate binding site. G92 is an S-adenosyl-L-methionine binding site. The disordered stretch occupies residues 133-153; sequence VSPKLASSTPTAETDPKGDGE.

This sequence belongs to the radical SAM superfamily. 7-carboxy-7-deazaguanine synthase family. Homodimer. Requires [4Fe-4S] cluster as cofactor. S-adenosyl-L-methionine serves as cofactor. The cofactor is Mg(2+).

It catalyses the reaction 6-carboxy-5,6,7,8-tetrahydropterin + H(+) = 7-carboxy-7-deazaguanine + NH4(+). It participates in purine metabolism; 7-cyano-7-deazaguanine biosynthesis. Its function is as follows. Catalyzes the complex heterocyclic radical-mediated conversion of 6-carboxy-5,6,7,8-tetrahydropterin (CPH4) to 7-carboxy-7-deazaguanine (CDG), a step common to the biosynthetic pathways of all 7-deazapurine-containing compounds. The sequence is that of 7-carboxy-7-deazaguanine synthase from Halobacterium salinarum (strain ATCC 29341 / DSM 671 / R1).